A 224-amino-acid chain; its full sequence is Pyridoxine/pyridoxamine 5'-phosphate oxidase (224 aa).

FMN-binding positions include 69–74 (RHVLLK), 83–84 (FT), R89, K90, and Q112. K74 is a substrate binding site. The substrate site is built by Y130, R134, and S138. Residues 148 to 149 (QS) and W194 each bind FMN. 200–202 (RMH) is a substrate binding site. R204 lines the FMN pocket.

The protein belongs to the pyridoxamine 5'-phosphate oxidase family. Homodimer. The cofactor is FMN.

The catalysed reaction is pyridoxamine 5'-phosphate + O2 + H2O = pyridoxal 5'-phosphate + H2O2 + NH4(+). It catalyses the reaction pyridoxine 5'-phosphate + O2 = pyridoxal 5'-phosphate + H2O2. The protein operates within cofactor metabolism; pyridoxal 5'-phosphate salvage; pyridoxal 5'-phosphate from pyridoxamine 5'-phosphate: step 1/1. It functions in the pathway cofactor metabolism; pyridoxal 5'-phosphate salvage; pyridoxal 5'-phosphate from pyridoxine 5'-phosphate: step 1/1. Its function is as follows. Catalyzes the oxidation of either pyridoxine 5'-phosphate (PNP) or pyridoxamine 5'-phosphate (PMP) into pyridoxal 5'-phosphate (PLP). The chain is Pyridoxine/pyridoxamine 5'-phosphate oxidase from Acidothermus cellulolyticus (strain ATCC 43068 / DSM 8971 / 11B).